A 123-amino-acid polypeptide reads, in one-letter code: Ribosome-binding factor A (123 aa).

Belongs to the RbfA family. Monomer. Binds 30S ribosomal subunits, but not 50S ribosomal subunits or 70S ribosomes.

The protein resides in the cytoplasm. Its function is as follows. One of several proteins that assist in the late maturation steps of the functional core of the 30S ribosomal subunit. Associates with free 30S ribosomal subunits (but not with 30S subunits that are part of 70S ribosomes or polysomes). Required for efficient processing of 16S rRNA. May interact with the 5'-terminal helix region of 16S rRNA. The polypeptide is Ribosome-binding factor A (Prochlorococcus marinus (strain NATL1A)).